The chain runs to 598 residues: MDKINIRNFAIIAHIDHGKSTLADRLIEECNGLEKREMKDQVLDSMDIERERGITIKAQTVRLMYTAKDGKVYYLNLMDTPGHVDFSYEVSRSLAACEGSLLVVDSTQGVEAQTLANVYKAIDSNHEIIPVLNKIDLASSDPDKVKSQIEEIIGIDASESLLVSAKSGIGIKDVLEAIVSRLPAPSGNFDNPLKAILVDTWYDTYLGIVILLRVVDGVIKKGMKIVMMSSNAVYQVDNIGIFTPHKKIVDQLSVGEIGFITASIKELSDCKIGDTITEEQRRCDNPMPGFRTIHPVVFCSIFPNEAGDFERLREALKKLQLNDASFTFDIEVSNALGYGFRCGFLGMLHLEVIQERLEREFNLDLTATAPGVVYQIISKNGILREVHNPHDFGDVQDIASIKEPWICATIMVPDQYLGVVMSLCNNKRGEKVDLSYSGNTALLKYRLPLSEVVFDFYDRIKSISKGYASLDWEMDGYMDSEIAKLTILINSEPVDALACIVHKSKVEQRGREICLRLKDLIPRQQYKIAIQAAVGSKIIARETISPYRKDVTAKLYGGDVTRRMKLLEKQKKGKKRLRAIGNVNVPHNAFIQALKIID.

In terms of domain architecture, tr-type G spans 4 to 186; that stretch reads INIRNFAIIA…AIVSRLPAPS (183 aa). Residues 16–21 and 133–136 each bind GTP; these read DHGKST and NKID.

This sequence belongs to the TRAFAC class translation factor GTPase superfamily. Classic translation factor GTPase family. LepA subfamily.

It is found in the cell inner membrane. It catalyses the reaction GTP + H2O = GDP + phosphate + H(+). Functionally, required for accurate and efficient protein synthesis under certain stress conditions. May act as a fidelity factor of the translation reaction, by catalyzing a one-codon backward translocation of tRNAs on improperly translocated ribosomes. Back-translocation proceeds from a post-translocation (POST) complex to a pre-translocation (PRE) complex, thus giving elongation factor G a second chance to translocate the tRNAs correctly. Binds to ribosomes in a GTP-dependent manner. This chain is Elongation factor 4, found in Ehrlichia ruminantium (strain Welgevonden).